We begin with the raw amino-acid sequence, 352 residues long: DNA polymerase IV (352 aa).

The UmuC domain occupies 7-187 (IIHIDMDCFY…LSLKKIPGIG (181 aa)). Positions 11 and 105 each coordinate Mg(2+). Glutamate 106 is an active-site residue.

The protein belongs to the DNA polymerase type-Y family. Monomer. It depends on Mg(2+) as a cofactor.

The protein localises to the cytoplasm. It catalyses the reaction DNA(n) + a 2'-deoxyribonucleoside 5'-triphosphate = DNA(n+1) + diphosphate. In terms of biological role, poorly processive, error-prone DNA polymerase involved in untargeted mutagenesis. Copies undamaged DNA at stalled replication forks, which arise in vivo from mismatched or misaligned primer ends. These misaligned primers can be extended by PolIV. Exhibits no 3'-5' exonuclease (proofreading) activity. May be involved in translesional synthesis, in conjunction with the beta clamp from PolIII. This chain is DNA polymerase IV, found in Colwellia psychrerythraea (strain 34H / ATCC BAA-681) (Vibrio psychroerythus).